The following is a 194-amino-acid chain: Holliday junction branch migration complex subunit RuvA (194 aa).

Residues 1 to 63 are domain I; sequence MFEYLKGTVA…EDELSLYGFM (63 aa). Positions 64–142 are domain II; sequence SIEELDMFQK…KTNVVYDYTL (79 aa). Residues 143 to 151 form a flexible linker region; sequence FNDDHKDDD. The segment at 151 to 194 is domain III; it reads DEAVQALMALGYSKLESEKAVEAVRDMSLGTEDVIKRALKWLMK.

The protein belongs to the RuvA family. As to quaternary structure, homotetramer. Forms an RuvA(8)-RuvB(12)-Holliday junction (HJ) complex. HJ DNA is sandwiched between 2 RuvA tetramers; dsDNA enters through RuvA and exits via RuvB. An RuvB hexamer assembles on each DNA strand where it exits the tetramer. Each RuvB hexamer is contacted by two RuvA subunits (via domain III) on 2 adjacent RuvB subunits; this complex drives branch migration. In the full resolvosome a probable DNA-RuvA(4)-RuvB(12)-RuvC(2) complex forms which resolves the HJ.

Its subcellular location is the cytoplasm. Functionally, the RuvA-RuvB-RuvC complex processes Holliday junction (HJ) DNA during genetic recombination and DNA repair, while the RuvA-RuvB complex plays an important role in the rescue of blocked DNA replication forks via replication fork reversal (RFR). RuvA specifically binds to HJ cruciform DNA, conferring on it an open structure. The RuvB hexamer acts as an ATP-dependent pump, pulling dsDNA into and through the RuvAB complex. HJ branch migration allows RuvC to scan DNA until it finds its consensus sequence, where it cleaves and resolves the cruciform DNA. This Alkaliphilus oremlandii (strain OhILAs) (Clostridium oremlandii (strain OhILAs)) protein is Holliday junction branch migration complex subunit RuvA.